Reading from the N-terminus, the 326-residue chain is ATP synthase gamma chain (326 aa).

The protein belongs to the ATPase gamma chain family. F-type ATPases have 2 components, CF(1) - the catalytic core - and CF(0) - the membrane proton channel. CF(1) has five subunits: alpha(3), beta(3), gamma(1), delta(1), epsilon(1). CF(0) has three main subunits: a, b and c.

It localises to the cell membrane. Its function is as follows. Produces ATP from ADP in the presence of a proton gradient across the membrane. The gamma chain is believed to be important in regulating ATPase activity and the flow of protons through the CF(0) complex. In Rhodococcus opacus (strain B4), this protein is ATP synthase gamma chain.